The primary structure comprises 241 residues: uncharacterized protein (241 aa).

The next 7 helical transmembrane spans lie at 12–32, 39–59, 89–109, 117–137, 152–172, 180–200, and 215–235; these read ITEI…LLLL, LLWL…EMKF, VYDV…ICYT, YYTF…NCVV, LFEY…ATML, IHFY…WFVY, and YVEA…SPLI.

Belongs to the mimivirus L68/R809 family.

The protein localises to the membrane. This is an uncharacterized protein from Acanthamoeba polyphaga mimivirus (APMV).